A 236-amino-acid polypeptide reads, in one-letter code: Orotidine 5'-phosphate decarboxylase (236 aa).

Substrate-binding positions include aspartate 11, lysine 33, 60–69 (DLKLHDIPNT), threonine 119, arginine 181, glutamine 190, glycine 210, and arginine 211. The active-site Proton donor is the lysine 62.

It belongs to the OMP decarboxylase family. Type 1 subfamily. In terms of assembly, homodimer.

It carries out the reaction orotidine 5'-phosphate + H(+) = UMP + CO2. It participates in pyrimidine metabolism; UMP biosynthesis via de novo pathway; UMP from orotate: step 2/2. In terms of biological role, catalyzes the decarboxylation of orotidine 5'-monophosphate (OMP) to uridine 5'-monophosphate (UMP). The chain is Orotidine 5'-phosphate decarboxylase from Cutibacterium acnes (strain DSM 16379 / KPA171202) (Propionibacterium acnes).